A 145-amino-acid polypeptide reads, in one-letter code: Bacilliredoxin ABC2045 (145 aa).

This sequence belongs to the bacilliredoxin family.

In Shouchella clausii (strain KSM-K16) (Alkalihalobacillus clausii), this protein is Bacilliredoxin ABC2045.